We begin with the raw amino-acid sequence, 310 residues long: UPF0761 membrane protein VSAL_I2938 (310 aa).

The next 6 membrane-spanning stretches (helical) occupy residues 34–54 (YMAYITLLSLVPLVTVLLSVL), 97–117 (MTAVGSGFLFVASVMLISAID), 136–156 (FSLYWMILTLGPLLVWASLAA), 178–198 (LLGWLPIILSFSAFLGLYLLV), 207–227 (HALVGAMSAGCLFEVSKVGFA), and 242–262 (ALAAVPILFVWIYLCWIIVLI).

It belongs to the UPF0761 family.

It is found in the cell inner membrane. The polypeptide is UPF0761 membrane protein VSAL_I2938 (Aliivibrio salmonicida (strain LFI1238) (Vibrio salmonicida (strain LFI1238))).